Consider the following 188-residue polypeptide: MYETSDFRKGLKIMLEGKPYVIVDFQHVKPGKGNQFTRTKLRNMLTGQNLESTFKSGEKFEVPNVENKEMSFLYKDDTGYNFMSQETFEQIAMSEEDLGEAKYYLTENLKVVILFYNEKAVACDVPKAVNLTVAQTDPGIKGDRVTGATKPATMETGLTVGVPLHINEGDVLRIDTSTGEYVERVSQK.

This sequence belongs to the elongation factor P family.

It is found in the cytoplasm. Its pathway is protein biosynthesis; polypeptide chain elongation. Involved in peptide bond synthesis. Stimulates efficient translation and peptide-bond synthesis on native or reconstituted 70S ribosomes in vitro. Probably functions indirectly by altering the affinity of the ribosome for aminoacyl-tRNA, thus increasing their reactivity as acceptors for peptidyl transferase. The polypeptide is Elongation factor P (Bdellovibrio bacteriovorus (strain ATCC 15356 / DSM 50701 / NCIMB 9529 / HD100)).